Reading from the N-terminus, the 269-residue chain is uncharacterized protein (269 aa).

The segment covering 1 to 12 has biased composition (basic residues); sequence MSKRTNNKKRKH. Positions 1-82 are disordered; that stretch reads MSKRTNNKKR…KKKENGNENV (82 aa). Residues 21 to 33 show a composition bias toward acidic residues; that stretch reads PENQDENQDEEFL. A compositionally biased stretch (basic and acidic residues) spans 34-63; that stretch reads EDKNKDKNQNKNKDKNKNKDMNKNKNKDMN.

This is an uncharacterized protein from Dictyostelium discoideum (Social amoeba).